The following is a 1248-amino-acid chain: Structural polyprotein (1248 aa).

Residues 1–10 show a composition bias toward polar residues; sequence MEFIPTQTFY. Residues 1-104 form a disordered region; that stretch reads MEFIPTQTFY…KKKKPGRRER (104 aa). The span at 22–44 shows a compositional bias: low complexity; it reads RPTIQVIRPRPRPQRQAGQLAQL. The tract at residues 36–68 is host transcription inhibition; it reads RQAGQLAQLISAVNKLTMRAVPQQKPRRNRKNK. The span at 60 to 72 shows a compositional bias: basic residues; the sequence is KPRRNRKNKKQKQ. The Nuclear localization signal motif lies at 61–99; it reads PRRNRKNKKQKQKQQAPQNNTNQKKQPPKKKPAQKKKKP. The span at 73–85 shows a compositional bias: low complexity; the sequence is KQQAPQNNTNQKK. Positions 84-114 are binding to the viral RNA; it reads KKQPPKKKPAQKKKKPGRRERMCMKIENDCI. The segment covering 86-101 has biased composition (basic residues); that stretch reads QPPKKKPAQKKKKPGR. Positions 99–113 are ribosome-binding; the sequence is PGRRERMCMKIENDC. Residues cysteine 113 and cysteine 128 are joined by a disulfide bond. A Peptidase S3 domain is found at 113–261; it reads CIFEVKHEGK…KITPEGAEEW (149 aa). Histidine 139 acts as the Charge relay system in catalysis. Positions 144–154 match the Nuclear export signal motif; sequence IDNADLAKLAF. The tract at residues 155-160 is interaction with spike glycoprotein E2; sequence KRSSKY. Aspartate 161 functions as the Charge relay system in the catalytic mechanism. A dimerization of the capsid protein region spans residues 183–193; it reads PEGYYNWHHGA. Serine 213 functions as the Charge relay system in the catalytic mechanism. The interval 219-223 is dimerization of the capsid protein; the sequence is DNKGR. The segment at 262 to 274 is functions as an uncleaved signal peptide for the precursor of protein E3/E2; that stretch reads SLAIPVMCLLANT. Residues 262–692 lie on the Extracellular side of the membrane; it reads SLAIPVMCLL…YYYELYPTMT (431 aa). Cystine bridges form between cysteine 269/cysteine 278, cysteine 283/cysteine 287, cysteine 286/cysteine 318, cysteine 344/cysteine 450, cysteine 347/cysteine 353, cysteine 416/cysteine 430, cysteine 478/cysteine 591, cysteine 526/cysteine 550, and cysteine 528/cysteine 545. N-linked (GlcNAc...) asparagine; by host glycosylation is present at asparagine 273. Interaction with host Mxra8 receptor stretches follow at residues 351–354 and 387–389; these read HSCH and HDW. Interaction with host Mxra8 receptor regions lie at residues 509-512 and 541-547; these read QSGN and VINNCKV. Residues asparagine 588 and asparagine 670 are each glycosylated (N-linked (GlcNAc...) asparagine; by host). Residues 693-713 traverse the membrane as a helical segment; it reads VVVVSVASFILLSMVGMAVGM. The Cytoplasmic segment spans residues 714–748; sequence CMCARRRCITPYELTPGATVPFLLSLICCIRTAKA. Positions 716 to 720 are interaction with the capsid protein; the sequence is CARRR. 3 S-palmitoyl cysteine; by host lipidation sites follow: cysteine 721, cysteine 741, and cysteine 742. Residues 721-741 are transient transmembrane before p62-6K protein processing; the sequence is CITPYELTPGATVPFLLSLIC. Cysteine 721 and cysteine 742 are joined by a disulfide. The Extracellular segment spans residues 749 to 763; sequence ATYQEAAVYLWNEQQ. A helical transmembrane segment spans residues 764–784; the sequence is PLFWLQALIPLAALIVLCNCL. The Cytoplasmic portion of the chain corresponds to 785 to 795; that stretch reads RLLPCCCKTLA. The chain crosses the membrane as a helical span at residues 796-816; the sequence is FLAVMSIGAHTVSAYEHVTVI. Residues 817-1224 are Extracellular-facing; the sequence is PNTVGVPYKT…AMSWVQKITG (408 aa). Disulfide bonds link cysteine 858–cysteine 923, cysteine 871–cysteine 903, cysteine 872–cysteine 905, and cysteine 877–cysteine 887. The E1 fusion peptide loop stretch occupies residues 893–910; it reads VYPFMWGGAYCFCDAENT. 2 N-linked (GlcNAc...) asparagine; by host glycosylation sites follow: asparagine 950 and asparagine 1079. 4 disulfide bridges follow: cysteine 1068–cysteine 1080, cysteine 1110–cysteine 1185, cysteine 1115–cysteine 1189, and cysteine 1137–cysteine 1179. Residues 1225 to 1245 traverse the membrane as a helical segment; the sequence is GVGLVVAVAALILIVVLCVSF. Cysteine 1242 is lipidated: S-palmitoyl cysteine; by host. Cysteine 1242 is lipidated: S-stearoyl cysteine; by host. At 1246-1248 the chain is on the cytoplasmic side; it reads SRH.

The protein belongs to the alphavirus structural polyprotein family. As to quaternary structure, homodimer. Homomultimer. Interacts with host karyopherin KPNA4; this interaction allows the nuclear import of the viral capsid protein. Interacts with spike glycoprotein E2. Interacts with host IRAK1; the interaction leads to inhibition of IRAK1-dependent signaling. The precursor of protein E3/E2 and E1 form a heterodimer shortly after synthesis. In terms of assembly, interacts with spike glycoprotein E2. The precursor of protein E3/E2 and E1 form a heterodimer shortly after synthesis. Processing of the precursor of protein E3/E2 into E2 and E3 results in a heterodimer of the spike glycoproteins E2 and E1. Spike at virion surface are constituted of three E2-E1 heterodimers. After target cell attachment and endocytosis, E1 changes conformation to form homotrimers. Interacts with 6K protein. Interacts with host MXRA8; this interaction mediates virus entry. The interaction involves 2 adjacent E2-E1 heterodimers. As to quaternary structure, interacts with spike glycoprotein E1. Processing of the precursor of protein E3/E2 into E2 and E3 results in a heterodimer of the spike glycoproteins E2 and E1. Spike at virion surface are constituted of a trimer of E2-E1 heterodimers. Interacts with 6K protein. Interacts with host MXRA8; this interaction mediates virus entry. The interaction involves 2 adjacent E2-E1 heterodimers. Oligomer. Interacts with spike glycoprotein E1. Interacts with spike glycoprotein E2. In terms of processing, specific enzymatic cleavages in vivo yield mature proteins. Capsid protein is auto-cleaved during polyprotein translation, unmasking a signal peptide at the N-terminus of the precursor of E3/E2. The remaining polyprotein is then targeted to the host endoplasmic reticulum, where host signal peptidase cleaves it into pE2, 6K and E1 proteins. pE2 is further processed to mature E3 and E2 by host furin in trans-Golgi vesicle. Palmitoylated via thioester bonds. These palmitoylations may induce disruption of the C-terminus transmembrane. This would result in the reorientation of E2 C-terminus from lumenal to cytoplasmic side. Post-translationally, N-glycosylated. In terms of processing, palmitoylated via thioester bonds.

The protein localises to the virion. It localises to the host cytoplasm. The protein resides in the host cell membrane. It is found in the host nucleus. Its subcellular location is the virion membrane. The protein localises to the host Golgi apparatus. It localises to the host trans-Golgi network. The protein resides in the host endoplasmic reticulum. The enzyme catalyses Autocatalytic release of the core protein from the N-terminus of the togavirus structural polyprotein by hydrolysis of a -Trp-|-Ser- bond.. Its function is as follows. Forms an icosahedral capsid with a T=4 symmetry composed of 240 copies of the capsid protein surrounded by a lipid membrane through which penetrate 80 spikes composed of trimers of E1-E2 heterodimers. The capsid protein binds to the viral RNA genome at a site adjacent to a ribosome binding site for viral genome translation following genome release. Possesses a protease activity that results in its autocatalytic cleavage from the nascent structural protein. Following its self-cleavage, the capsid protein transiently associates with ribosomes, and within several minutes the protein binds to viral RNA and rapidly assembles into icosahedric core particles. The resulting nucleocapsid eventually associates with the cytoplasmic domain of the spike glycoprotein E2 at the cell membrane, leading to budding and formation of mature virions. In case of infection, new virions attach to target cells and after clathrin-mediated endocytosis their membrane fuses with the host endosomal membrane. This leads to the release of the nucleocapsid into the cytoplasm, followed by an uncoating event necessary for the genomic RNA to become accessible. The uncoating might be triggered by the interaction of capsid proteins with ribosomes. Binding of ribosomes would release the genomic RNA since the same region is genomic RNA-binding and ribosome-binding. Specifically inhibits interleukin-1 receptor-associated kinase 1/IRAK1-dependent signaling during viral entry, representing a means by which the alphaviruses may evade innate immune detection and activation prior to viral gene expression. Degrades host cyclic GMP-AMP synthase (CGAS) thereby inhibiting the cGAS-STING pathway. In terms of biological role, provides the signal sequence for the translocation of the precursor of protein E3/E2 to the host endoplasmic reticulum. Furin-cleaved E3 remains associated with spike glycoprotein E1 and mediates pH protection of the latter during the transport via the secretory pathway. After virion release from the host cell, the assembly protein E3 is gradually released in the extracellular space. Functionally, plays a role in viral attachment to target host cell, by binding to the cell receptor MXRA8. Synthesized as a p62 precursor which is processed by furin at the cell membrane just before virion budding, giving rise to E2-E1 heterodimer. The p62-E1 heterodimer is stable, whereas E2-E1 is unstable and dissociate at low pH. p62 is processed at the last step, presumably to avoid E1 fusion activation before its final export to cell surface. E2 C-terminus contains a transitory transmembrane that would be disrupted by palmitoylation, resulting in reorientation of the C-terminal tail from lumenal to cytoplasmic side. This step is critical since E2 C-terminus is involved in budding by interacting with capsid proteins. This release of E2 C-terminus in cytoplasm occurs lately in protein export, and precludes premature assembly of particles at the endoplasmic reticulum membrane. Acts as a viroporin that participates in virus glycoprotein processing and transport to the plasma membrane, cell permeabilization and budding of viral particles. Disrupts the calcium homeostasis of the cell, probably at the endoplasmic reticulum level. This leads to cytoplasmic calcium elevation. Because of its lipophilic properties, the 6K protein is postulated to influence the selection of lipids that interact with the transmembrane domains of the glycoproteins, which, in turn, affects the deformability of the bilayer required for the extreme curvature that occurs as budding proceeds. Present in low amount in virions, about 3% compared to viral glycoproteins. Its function is as follows. Class II viral fusion protein. Fusion activity is inactive as long as E1 is bound to E2 in mature virion. After virus attachment to target cell and endocytosis, acidification of the endosome induce dissociation of E1/E2 heterodimer and concomitant trimerization of the E1 subunits. This E1 trimer is fusion active, and promotes release of viral nucleocapsid in cytoplasm after endosome and viral membrane fusion. Efficient fusion requires the presence of cholesterol and sphingolipid in the target membrane. The protein is Structural polyprotein of Chikungunya virus (strain S27-African prototype) (CHIKV).